The sequence spans 310 residues: MENGVVMEDRLIAEEIKKLKEERNAIILAHFYTRGEVREFADFVGDSLSLCREAVNSKADVIVFAGVHFMAESASILSPEKSVLLPVPEAGCPMADMVTVETLRKEKEKHPDAAVVCYVNSSAAVKAESDICCTSSNAVNVVNSVENREIIFVPDKNLGAFVSLHTDKKIHLRPGFCHVHENIGKEDIEELKNLHPEAEFLAHPECRPEVMSFADHILSTSGIVKEAGRSESTEFIIGTEKEIVQSLKRKYPDRKFYPVSKKAVCYNMKKVTLESILNSLQNMEYEVQVPEHVRAKAKKALDRMLSVSGT.

Positions 30 and 47 each coordinate iminosuccinate. Cys-92 provides a ligand contact to [4Fe-4S] cluster. Residues 118-120 (YVN) and Ser-135 each bind iminosuccinate. A [4Fe-4S] cluster-binding site is contributed by Cys-177. Iminosuccinate-binding positions include 203–205 (HPE) and Thr-220. Cys-265 provides a ligand contact to [4Fe-4S] cluster.

Belongs to the quinolinate synthase family. Type 2 subfamily. [4Fe-4S] cluster is required as a cofactor.

Its subcellular location is the cytoplasm. The catalysed reaction is iminosuccinate + dihydroxyacetone phosphate = quinolinate + phosphate + 2 H2O + H(+). Its pathway is cofactor biosynthesis; NAD(+) biosynthesis; quinolinate from iminoaspartate: step 1/1. Catalyzes the condensation of iminoaspartate with dihydroxyacetone phosphate to form quinolinate. This Methanosarcina acetivorans (strain ATCC 35395 / DSM 2834 / JCM 12185 / C2A) protein is Quinolinate synthase 2.